The chain runs to 614 residues: ATP-dependent rRNA helicase SPB4 (614 aa).

Residues 10–38 (WSVLKCDLHPWIKEAIKSLGYPTMTPVQA) carry the Q motif motif. Residues 41–233 (IPLFSGNKDV…RTGMANPVKI (193 aa)) enclose the Helicase ATP-binding domain. Residue 54-61 (AVTGSGKT) participates in ATP binding. A DEAD box motif is present at residues 181 to 184 (DEAD). In terms of domain architecture, Helicase C-terminal spans 260–431 (KISALIALIK…KFQKKFRKYM (172 aa)). The stretch at 510–581 (EYADKQKEES…IEKQLMDDSS (72 aa)) forms a coiled coil. Positions 514 to 529 (KQKEESRKKNLEEDKA) are enriched in basic and acidic residues. The tract at residues 514-614 (KQKEESRKKN…DSMQGSFDDL (101 aa)) is disordered. Positions 530–541 (RKVHDAKKRKEL) are enriched in basic residues. Composition is skewed to basic and acidic residues over residues 551–563 (KTDKIETKQERRE) and 584–595 (EETKVDWKEMVK). A compositionally biased stretch (polar residues) spans 604-614 (SDSMQGSFDDL).

It belongs to the DEAD box helicase family. DDX55/SPB4 subfamily. In terms of assembly, component of pre-60S ribosomal complexes.

Its subcellular location is the nucleus. The protein localises to the nucleolus. It catalyses the reaction ATP + H2O = ADP + phosphate + H(+). Its function is as follows. ATP-binding RNA helicase involved in the biogenesis of 60S ribosomal subunits. Binds 90S pre-ribosomal particles and dissociates from pre-60S ribosomal particles after processing of 27SB pre-rRNA. Required for the normal formation of 18S rRNA through the processing of pre-rRNAs at sites A0, A1 and A2, and the normal formation of 25S and 5.8S rRNAs through the processing of pre-rRNAs at sites C1 and C2. The sequence is that of ATP-dependent rRNA helicase SPB4 from Debaryomyces hansenii (strain ATCC 36239 / CBS 767 / BCRC 21394 / JCM 1990 / NBRC 0083 / IGC 2968) (Yeast).